The sequence spans 108 residues: UPF0060 membrane protein YnfA (108 aa).

The Periplasmic portion of the chain corresponds to 1–5 (MIKTT). Residues 6–26 (LLFFATALCEIIGCFLPWLWL) form a helical membrane-spanning segment. Residues 27 to 30 (KRNA) are Cytoplasmic-facing. Residues 31-51 (SIWLLLPAGISLALFVWLLTL) traverse the membrane as a helical segment. Residues 52-60 (HPAASGRIY) lie on the Periplasmic side of the membrane. A helical membrane pass occupies residues 61–81 (AAYGGVYVCTALMWLRVVDGV). The Cytoplasmic segment spans residues 82–84 (KLT). A helical membrane pass occupies residues 85–105 (LYDWTGALIALCGMLIIVAGW). At 106–108 (GRT) the chain is on the periplasmic side.

The protein belongs to the UPF0060 family.

It localises to the cell inner membrane. The polypeptide is UPF0060 membrane protein YnfA (Shigella dysenteriae serotype 1 (strain Sd197)).